Here is an 84-residue protein sequence, read N- to C-terminus: Mitochondrial import inner membrane translocase subunit Tim9 (84 aa).

The Twin CX3C motif signature appears at 28–52; sequence CFMDCVKDFTTREVKPEETTCSESC. 2 disulfides stabilise this stretch: C28–C52 and C32–C48.

The protein belongs to the small Tim family. Heterohexamer; composed of 3 copies of TIMM9 and 3 copies of TIMM10/TIM10A, named soluble 70 kDa complex. The complex forms a 6-bladed alpha-propeller structure and associates with the TIMM22 component of the TIM22 complex. Interacts with multi-pass transmembrane proteins in transit.

The protein resides in the mitochondrion inner membrane. In terms of biological role, mitochondrial intermembrane chaperone that participates in the import and insertion of multi-pass transmembrane proteins into the mitochondrial inner membrane. May also be required for the transfer of beta-barrel precursors from the TOM complex to the sorting and assembly machinery (SAM complex) of the outer membrane. Acts as a chaperone-like protein that protects the hydrophobic precursors from aggregation and guide them through the mitochondrial intermembrane space. The sequence is that of Mitochondrial import inner membrane translocase subunit Tim9 (timm9) from Danio rerio (Zebrafish).